The sequence spans 232 residues: Large ribosomal subunit protein uL1 (232 aa).

It belongs to the universal ribosomal protein uL1 family. In terms of assembly, part of the 50S ribosomal subunit.

Binds directly to 23S rRNA. The L1 stalk is quite mobile in the ribosome, and is involved in E site tRNA release. Its function is as follows. Protein L1 is also a translational repressor protein, it controls the translation of the L11 operon by binding to its mRNA. The chain is Large ribosomal subunit protein uL1 from Lysinibacillus sphaericus (strain C3-41).